A 440-amino-acid polypeptide reads, in one-letter code: Ultraviolet-B receptor UVR8 (440 aa).

Residue A2 is modified to N-acetylalanine. RCC1 repeat units lie at residues 2–31 (AEDM…VALL), 32–84 (SGDI…AYSQ), 86–137 (GMEV…AVTM), 139–189 (GEVQ…AVTE), 190–241 (DGDL…SVSY), 243–293 (GALY…ALTS), 294–345 (DGKL…AVTE), and 347–399 (NNVF…SGKS). Residues 397–423 (GKSWVSPAERYAVVPDETGLTDGSSKG) are required for interaction with COP1. The disordered stretch occupies residues 413–440 (ETGLTDGSSKGNGGDISVPQTDVKRVRI).

Homodimer in the absence of UV-B, but absorption of UV-B induces monomerization of UVR8 and interaction with COP1. Interacts with RUP1, RUP2 and histone H2B.

It is found in the nucleus. Its subcellular location is the cytoplasm. The protein localises to the cytosol. In terms of biological role, UV-B specific signaling component that acts as a UV-B photoreceptor and plays a key role in establishing UV-protective responses in plants. Upon UV-B irradiation, UVR8 undergoes an immediate switch from homodimer to monomer, accumulates in the nucleus, interacts with the photomorphogenic repressor COP1 and regulates the expression of the transcription factor HY5 by associating with chromatin (through histone H2B binding) in the HY5 promoter region. UVR8 is involved in controlling aspects of leaf growth and morphogenesis in response to UV-B, is required for normal progression of endocycle and has a regulatory role in stomatal differentiation. Is required for plant circadian clock response to photomorphogenic UV-B light, partly through the transcriptional activation of responsive clock genes. Promotes photosynthetic efficiency at elevated levels of UV-B. Plays a role in mediating the effects of UV-B radiation on pathogen resistance by controlling the expression of the sinapate biosynthetic pathway. The two tryptophans, Trp-285 and Trp-233, serve collectively as the UV-B chromophore. This chain is Ultraviolet-B receptor UVR8, found in Arabidopsis thaliana (Mouse-ear cress).